The chain runs to 236 residues: Orotidine 5'-phosphate decarboxylase (236 aa).

Substrate is bound by residues aspartate 14, lysine 36, 63–72, threonine 123, arginine 184, glutamine 193, glycine 213, and arginine 214; that span reads DLKFHDIPNT. Lysine 65 acts as the Proton donor in catalysis.

It belongs to the OMP decarboxylase family. Type 1 subfamily. Homodimer.

It catalyses the reaction orotidine 5'-phosphate + H(+) = UMP + CO2. Its pathway is pyrimidine metabolism; UMP biosynthesis via de novo pathway; UMP from orotate: step 2/2. Functionally, catalyzes the decarboxylation of orotidine 5'-monophosphate (OMP) to uridine 5'-monophosphate (UMP). In Marinobacter nauticus (strain ATCC 700491 / DSM 11845 / VT8) (Marinobacter aquaeolei), this protein is Orotidine 5'-phosphate decarboxylase.